A 92-amino-acid chain; its full sequence is METIPKLMAAVVLLTVCLEGCSSQHWSYGLRPGGKRNTEHLVDSFQEMGKEEDQMAEPQNFECTVHWPRSPLRDLRGALERLIEEEAGQKKM.

The first 23 residues, methionine 1 to serine 23, serve as a signal peptide directing secretion. Glutamine 24 carries the pyrrolidone carboxylic acid modification. Position 33 is a glycine amide (glycine 33).

This sequence belongs to the GnRH family. In terms of processing, the precursor is cleaved by ACE, which removes the Gly-Lys-Arg peptide at the C-terminus, leading to mature hormone. The mature form of Gonadoliberin-1 is also cleaved and degraded by ACE. In terms of tissue distribution, central nervous system.

It localises to the secreted. In terms of biological role, stimulates the secretion of gonadotropins; it stimulates the secretion of both luteinizing and follicle-stimulating hormones. The chain is Progonadoliberin-1 (Gnrh1) from Rattus norvegicus (Rat).